The chain runs to 35 residues: MSDIN-like toxin proprotein 6 (35 aa).

Positions Met1 to Pro10 are excised as a propeptide. Positions Phe11 to Pro18 form a cross-link, cyclopeptide (Phe-Pro). A propeptide spanning residues Cys19–Cys35 is cleaved from the precursor.

The protein belongs to the MSDIN fungal toxin family. Post-translationally, processed by the macrocyclase-peptidase enzyme POPB to yield a toxic cyclic octapeptide. POPB first removes 10 residues from the N-terminus. Conformational trapping of the remaining peptide forces the enzyme to release this intermediate rather than proceed to macrocyclization. The enzyme rebinds the remaining peptide in a different conformation and catalyzes macrocyclization of the N-terminal 8 residues. As to expression, expressed in basidiocarps.

In terms of biological role, probable toxin that belongs to the MSDIN-like toxin family responsible for a large number of food poisoning cases and deaths. The polypeptide is MSDIN-like toxin proprotein 6 (Amanita exitialis (Guangzhou destroying angel)).